We begin with the raw amino-acid sequence, 277 residues long: Large ribosomal subunit protein uL2 (277 aa).

The tract at residues 222-277 (GVAMNPVDHPHGGGEGRTSGGRHPVTPWGKPTKGKKTRSNKATDKFIMRSRHQRKK) is disordered.

Belongs to the universal ribosomal protein uL2 family. As to quaternary structure, part of the 50S ribosomal subunit. Forms a bridge to the 30S subunit in the 70S ribosome.

In terms of biological role, one of the primary rRNA binding proteins. Required for association of the 30S and 50S subunits to form the 70S ribosome, for tRNA binding and peptide bond formation. It has been suggested to have peptidyltransferase activity; this is somewhat controversial. Makes several contacts with the 16S rRNA in the 70S ribosome. The chain is Large ribosomal subunit protein uL2 from Brucella ovis (strain ATCC 25840 / 63/290 / NCTC 10512).